The following is a 247-amino-acid chain: Cell division protein ZapD (247 aa).

Belongs to the ZapD family. Interacts with FtsZ.

Its subcellular location is the cytoplasm. Cell division factor that enhances FtsZ-ring assembly. Directly interacts with FtsZ and promotes bundling of FtsZ protofilaments, with a reduction in FtsZ GTPase activity. The sequence is that of Cell division protein ZapD from Shigella boydii serotype 18 (strain CDC 3083-94 / BS512).